The sequence spans 204 residues: Large ribosomal subunit protein uL4 (204 aa).

Positions 44-76 (RAGTHRTKGMGEISGTTKKPYRQKGTGSARQGS) are disordered.

Belongs to the universal ribosomal protein uL4 family. As to quaternary structure, part of the 50S ribosomal subunit.

In terms of biological role, one of the primary rRNA binding proteins, this protein initially binds near the 5'-end of the 23S rRNA. It is important during the early stages of 50S assembly. It makes multiple contacts with different domains of the 23S rRNA in the assembled 50S subunit and ribosome. Its function is as follows. Forms part of the polypeptide exit tunnel. The chain is Large ribosomal subunit protein uL4 from Gluconobacter oxydans (strain 621H) (Gluconobacter suboxydans).